Here is a 34-residue protein sequence, read N- to C-terminus: Chlorotoxin-like peptide AaCtx (34 aa).

Cystine bridges form between cysteine 2-cysteine 19, cysteine 5-cysteine 27, cysteine 16-cysteine 32, and cysteine 20-cysteine 34.

Belongs to the short scorpion toxin superfamily. Chloride channel inhibitor family. Expressed by the venom gland.

The protein resides in the secreted. Its function is as follows. Toxin with unknown function in healthy organisms. On glioma cells, interacts with chloride channels (probably ClC-3/CLCN3) and MMP2 at the surface of glioma cells. This complex is then internalized via caveolae, thus inhibiting the chloride channels necessary for cell shrinkage and tumor propagation. Inhibits migration and invasion of U87 glioma cells expressing CLCN3/ClC-3 voltage-gated chloride channels. The chain is Chlorotoxin-like peptide AaCtx from Androctonus australis (Sahara scorpion).